The chain runs to 226 residues: Cytidylate kinase (226 aa).

11–19 (GPASAGKST) provides a ligand contact to ATP.

This sequence belongs to the cytidylate kinase family. Type 1 subfamily.

It localises to the cytoplasm. The catalysed reaction is CMP + ATP = CDP + ADP. It catalyses the reaction dCMP + ATP = dCDP + ADP. The polypeptide is Cytidylate kinase (Pediococcus pentosaceus (strain ATCC 25745 / CCUG 21536 / LMG 10740 / 183-1w)).